We begin with the raw amino-acid sequence, 161 residues long: Ferric uptake regulation protein 1 (161 aa).

Zn(2+)-binding residues include cysteine 94 and cysteine 97.

The protein belongs to the Fur family.

It is found in the cytoplasm. Acts as a global negative controlling element, employing Fe(2+) as a cofactor to bind the operator of the repressed genes. The polypeptide is Ferric uptake regulation protein 1 (fur1) (Mycolicibacterium fortuitum (Mycobacterium fortuitum)).